Consider the following 189-residue polypeptide: Large ribosomal subunit protein uL5 (189 aa).

Belongs to the universal ribosomal protein uL5 family. In terms of assembly, part of the 50S ribosomal subunit; part of the 5S rRNA/L5/L18/L25 subcomplex. Contacts the 5S rRNA and the P site tRNA. Forms a bridge to the 30S subunit in the 70S ribosome.

This is one of the proteins that bind and probably mediate the attachment of the 5S RNA into the large ribosomal subunit, where it forms part of the central protuberance. In the 70S ribosome it contacts protein S13 of the 30S subunit (bridge B1b), connecting the 2 subunits; this bridge is implicated in subunit movement. Contacts the P site tRNA; the 5S rRNA and some of its associated proteins might help stabilize positioning of ribosome-bound tRNAs. The protein is Large ribosomal subunit protein uL5 of Kocuria rhizophila (strain ATCC 9341 / DSM 348 / NBRC 103217 / DC2201).